A 350-amino-acid chain; its full sequence is Protein O-mannose kinase (350 aa).

Met-1 is subject to N-acetylmethionine. The Cytoplasmic segment spans residues 1–20 (MEKQPQNKRRGLAPREVPPA). A helical; Signal-anchor for type II membrane protein membrane pass occupies residues 21–43 (VGLLLIMALMNTLLYLCLDHFFI). At 44–350 (APRQSIVDPR…AVMSQAREML (307 aa)) the chain is on the lumenal side. In terms of domain architecture, Protein kinase spans 81–350 (VRQLKRVGEG…AVMSQAREML (270 aa)). 3 N-linked (GlcNAc...) asparagine glycosylation sites follow: Asn-165, Asn-220, and Asn-235.

The protein belongs to the protein kinase superfamily. Ser/Thr protein kinase family. STKL subfamily.

It is found in the endoplasmic reticulum membrane. The catalysed reaction is 3-O-[beta-D-GalNAc-(1-&gt;3)-beta-D-GlcNAc-(1-&gt;4)-alpha-D-Man]-L-Thr-[protein] + ATP = 3-O-[beta-D-GalNAc-(1-&gt;3)-beta-D-GlcNAc-(1-&gt;4)-(O-6-P-alpha-D-Man)]-Thr-[protein] + ADP + H(+). Functionally, protein O-mannose kinase that specifically mediates phosphorylation at the 6-position of an O-mannose of the trisaccharide (N-acetylgalactosamine (GalNAc)-beta-1,3-N-acetylglucosamine (GlcNAc)-beta-1,4-mannose) to generate phosphorylated O-mannosyl trisaccharide (N-acetylgalactosamine-beta-1,3-N-acetylglucosamine-beta-1,4-(phosphate-6-)mannose). Phosphorylated O-mannosyl trisaccharide is a carbohydrate structure present in alpha-dystroglycan (DAG1), which is required for binding laminin G-like domain-containing extracellular proteins with high affinity. Only shows kinase activity when the GalNAc-beta-3-GlcNAc-beta-terminus is linked to the 4-position of O-mannose, suggesting that this disaccharide serves as the substrate recognition motif. This Macaca fascicularis (Crab-eating macaque) protein is Protein O-mannose kinase (POMK).